Here is an 85-residue protein sequence, read N- to C-terminus: Sodium channel neurotoxin MeuNaTxalpha-1 (85 aa).

The signal sequence occupies residues 1 to 19; that stretch reads MNSLVMISLALLVMTGVES. Residues 21 to 83 form the LCN-type CS-alpha/beta domain; it reads RDGYIADDKN…VPIKVSGKCN (63 aa). The interval 27-31 is specificity module, loop 1; that stretch reads DDKNC. Disulfide bonds link cysteine 31–cysteine 82, cysteine 35–cysteine 55, cysteine 41–cysteine 65, and cysteine 45–cysteine 67. 2 specificity module, loop regions span residues 58-62 and 75-83; these read AGQYG and PIKVSGKCN. At asparagine 83 the chain carries Asparagine amide.

This sequence belongs to the long (4 C-C) scorpion toxin superfamily. Sodium channel inhibitor family. Alpha subfamily. In terms of processing, C-terminal amidation does not appear to play an important role in activity, since the non-amidated recombinant toxin and the native toxin (which is amidated) show similar activities on all sodium channels tested. Expressed by the venom gland.

The protein localises to the secreted. Its function is as follows. Alpha toxins bind voltage-independently at site-3 of sodium channels (Nav) and inhibit the inactivation of the activated channels, thereby blocking neuronal transmission. This toxin inhibits inactivation of Nav1.6/SCN8A (EC(50)=3.1 uM) and drosophila DmNav1 (EC(50)=1.17 uM). It also shows a weak inhibition of inactivation on Nav1.2/SCN2A Nav1.3/SCN3A, and Nav1.7/SCN9A. The toxin (1 uM) does not significantly shift the midpoint of activation at the two channels, but induces a significant depolarizing shift in the V(1/2) of inactivation of the channels. The toxin has also been shown to dose-dependently stimulates intracellular signaling in DRG neurons through activation of two kinases (type II protein kinase A (PKA-II) and MAP kinases 1/3 (MAPK1/MAPK3)). Nav1.2/SCN2A is strongly suggested to be the target channel predominantly involved in this activation. In vivo, the toxin induces a dose-dependent thermal hyperalgesia lasting 30-45 minutes. In Mesobuthus eupeus (Lesser Asian scorpion), this protein is Sodium channel neurotoxin MeuNaTxalpha-1.